The primary structure comprises 152 residues: UPF0178 protein Plav_1521 (152 aa).

Positions 114-152 (LRETGQSKGGGPAFSKEDRSRFLRSLEDTVQAIRRRPPP) are disordered. The segment covering 128–140 (SKEDRSRFLRSLE) has biased composition (basic and acidic residues).

It belongs to the UPF0178 family.

This is UPF0178 protein Plav_1521 from Parvibaculum lavamentivorans (strain DS-1 / DSM 13023 / NCIMB 13966).